We begin with the raw amino-acid sequence, 417 residues long: NADH-quinone oxidoreductase subunit D (417 aa).

This sequence belongs to the complex I 49 kDa subunit family. NDH-1 is composed of 14 different subunits. Subunits NuoB, C, D, E, F, and G constitute the peripheral sector of the complex.

The protein localises to the cell inner membrane. The catalysed reaction is a quinone + NADH + 5 H(+)(in) = a quinol + NAD(+) + 4 H(+)(out). NDH-1 shuttles electrons from NADH, via FMN and iron-sulfur (Fe-S) centers, to quinones in the respiratory chain. The immediate electron acceptor for the enzyme in this species is believed to be ubiquinone. Couples the redox reaction to proton translocation (for every two electrons transferred, four hydrogen ions are translocated across the cytoplasmic membrane), and thus conserves the redox energy in a proton gradient. The sequence is that of NADH-quinone oxidoreductase subunit D from Paraburkholderia xenovorans (strain LB400).